The following is a 176-amino-acid chain: Large ribosomal subunit protein uL6 (176 aa).

The protein belongs to the universal ribosomal protein uL6 family. Part of the 50S ribosomal subunit.

In terms of biological role, this protein binds to the 23S rRNA, and is important in its secondary structure. It is located near the subunit interface in the base of the L7/L12 stalk, and near the tRNA binding site of the peptidyltransferase center. In Paraburkholderia phymatum (strain DSM 17167 / CIP 108236 / LMG 21445 / STM815) (Burkholderia phymatum), this protein is Large ribosomal subunit protein uL6.